The chain runs to 439 residues: 5-hydroxybenzimidazole synthase (439 aa).

Substrate is bound by residues M96, Y125, H164, 187-189 (SKG), 228-231 (NGIR), and E267. Position 271 (H271) interacts with Zn(2+). Y294 contributes to the substrate binding site. A Zn(2+)-binding site is contributed by H335. [4Fe-4S] cluster-binding residues include C410, C413, and C417.

It belongs to the ThiC family. 5-hydroxybenzimidazole synthase subfamily. As to quaternary structure, homodimer. [4Fe-4S] cluster serves as cofactor.

It carries out the reaction 5-amino-1-(5-phospho-beta-D-ribosyl)imidazole + AH2 + S-adenosyl-L-methionine = 5-hydroxybenzimidazole + 5'-deoxyadenosine + formate + L-methionine + A + NH4(+) + phosphate + 2 H(+). In terms of biological role, catalyzes the conversion of aminoimidazole ribotide (AIR) to 5-hydroxybenzimidazole (5-HBI) in a radical S-adenosyl-L-methionine (SAM)-dependent reaction. Is thus involved in the anaerobic biosynthesis of the benzimidazole lower axial ligand of the cobamide produced by D.autotrophicum. This Desulforapulum autotrophicum (strain ATCC 43914 / DSM 3382 / VKM B-1955 / HRM2) (Desulfobacterium autotrophicum) protein is 5-hydroxybenzimidazole synthase.